The primary structure comprises 1187 residues: Nicotinate dehydrogenase subunit B (1187 aa).

A helical transmembrane segment spans residues 764 to 784 (WWFGSLAGVFGAALGMLATAL). Cytochrome c domains are found at residues 804-907 (AMLE…MSQT), 949-1057 (AQWN…SSLE), and 1075-1163 (VSLS…RHRF). Heme c contacts are provided by Cys818, Cys821, His822, Cys964, Cys967, His968, Cys1088, Cys1091, and His1092.

It depends on Mo-molybdopterin cytosine dinucleotide as a cofactor.

The protein resides in the membrane. The catalysed reaction is 2 Fe(III)-[cytochrome] + nicotinate + H2O = 2 Fe(II)-[cytochrome] + 6-hydroxynicotinate + 2 H(+). Its pathway is cofactor degradation; nicotinate degradation. Subunit of the two-component enzyme NicAB that mediates nicotinate hydroxylation, the first step in the aerobic nicotinate degradation pathway. Mediates conversion of nicotinate into 6-hydroxynicotinate (6HNA). This chain is Nicotinate dehydrogenase subunit B (nicB), found in Pseudomonas putida (strain ATCC 47054 / DSM 6125 / CFBP 8728 / NCIMB 11950 / KT2440).